Here is a 316-residue protein sequence, read N- to C-terminus: 4-hydroxy-3-methylbut-2-enyl diphosphate reductase (316 aa).

[4Fe-4S] cluster is bound at residue Cys12. The (2E)-4-hydroxy-3-methylbut-2-enyl diphosphate site is built by His43 and His81. 2 residues coordinate dimethylallyl diphosphate: His43 and His81. Residues His43 and His81 each contribute to the isopentenyl diphosphate site. Residue Cys103 coordinates [4Fe-4S] cluster. His131 contributes to the (2E)-4-hydroxy-3-methylbut-2-enyl diphosphate binding site. A dimethylallyl diphosphate-binding site is contributed by His131. Isopentenyl diphosphate is bound at residue His131. Glu133 (proton donor) is an active-site residue. Thr170 is a (2E)-4-hydroxy-3-methylbut-2-enyl diphosphate binding site. Position 198 (Cys198) interacts with [4Fe-4S] cluster. Residues Ser226, Asn228, and Ser271 each coordinate (2E)-4-hydroxy-3-methylbut-2-enyl diphosphate. Dimethylallyl diphosphate-binding residues include Ser226, Asn228, and Ser271. Ser226, Asn228, and Ser271 together coordinate isopentenyl diphosphate.

It belongs to the IspH family. It depends on [4Fe-4S] cluster as a cofactor.

It catalyses the reaction isopentenyl diphosphate + 2 oxidized [2Fe-2S]-[ferredoxin] + H2O = (2E)-4-hydroxy-3-methylbut-2-enyl diphosphate + 2 reduced [2Fe-2S]-[ferredoxin] + 2 H(+). It carries out the reaction dimethylallyl diphosphate + 2 oxidized [2Fe-2S]-[ferredoxin] + H2O = (2E)-4-hydroxy-3-methylbut-2-enyl diphosphate + 2 reduced [2Fe-2S]-[ferredoxin] + 2 H(+). The protein operates within isoprenoid biosynthesis; dimethylallyl diphosphate biosynthesis; dimethylallyl diphosphate from (2E)-4-hydroxy-3-methylbutenyl diphosphate: step 1/1. It functions in the pathway isoprenoid biosynthesis; isopentenyl diphosphate biosynthesis via DXP pathway; isopentenyl diphosphate from 1-deoxy-D-xylulose 5-phosphate: step 6/6. Catalyzes the conversion of 1-hydroxy-2-methyl-2-(E)-butenyl 4-diphosphate (HMBPP) into a mixture of isopentenyl diphosphate (IPP) and dimethylallyl diphosphate (DMAPP). Acts in the terminal step of the DOXP/MEP pathway for isoprenoid precursor biosynthesis. The chain is 4-hydroxy-3-methylbut-2-enyl diphosphate reductase from Bacillus cereus (strain B4264).